The following is a 160-amino-acid chain: Dr hemagglutinin structural subunit (160 aa).

Residues 1 to 21 (MKKLAIMAAASMVFAVSSAHA) form the signal peptide. Residues 22 to 75 (GFTPSGTTGTTKLTVTEECQVRVGDLTVAKTRGQLTDAAPIGPVTVQALGCDAR) form a receptor-binding region.

Belongs to the Dr-adhesin family.

Its subcellular location is the fimbrium. Hemagglutinins of uropathogenic E.coli mediate adherence to the upper urinary tract. These adhesins bind to the Dr blood group antigen and also agglutinate human erythrocytes in the presence of D-mannose (mannose-resistant hemagglutination (MRHA)). In Escherichia coli, this protein is Dr hemagglutinin structural subunit (draA).